A 167-amino-acid polypeptide reads, in one-letter code: Telethonin (167 aa).

S39 is modified (phosphoserine). Positions 144-167 (VPVSKPGALRRSLSRSMSQEAQRG) are disordered. Positions 157–167 (SRSMSQEAQRG) are enriched in polar residues.

In terms of assembly, interacts with MYOZ1, MYOZ2 and MYOZ3. Interacts with CSRP3. Interacts directly with the N-terminal Ig-like domains of 2 titin (TTN) molecules. Interacts with ANKRD2; the interaction is direct. In terms of tissue distribution, heart and skeletal muscle.

The protein localises to the cytoplasm. Its subcellular location is the myofibril. It is found in the sarcomere. Muscle assembly regulating factor. Mediates the antiparallel assembly of titin (TTN) molecules at the sarcomeric Z-disk. In Homo sapiens (Human), this protein is Telethonin (TCAP).